The primary structure comprises 127 residues: MKFETINQESIAKLMEIFYEKVRKDKDLGPIFNNAIGTSDEEWKEHKAKIGNFWAGMLLGEGDYNGQPLKKHLDLPPFPQEFFEIWLKLFEESLNIVYNEEMKNVILQRAQMIASHFQNMLYKYGGH.

Heme contacts are provided by Tyr64 and His72.

The protein belongs to the truncated hemoglobin family. Group III subfamily. In terms of assembly, monomer. Heme is required as a cofactor.

Its subcellular location is the cytoplasm. Its function is as follows. Has been suggested to be involved in cytochrome c peroxidase or P450-like oxygen chemistry or cyanide detoxification. The high oxygen affinity of this protein suggests that it probably does not function as an oxygen transporter. This is Group 3 truncated hemoglobin ctb (ctb) from Campylobacter jejuni subsp. jejuni serotype O:2 (strain ATCC 700819 / NCTC 11168).